The sequence spans 501 residues: Glutamyl-tRNA(Gln) amidotransferase subunit A (501 aa).

Catalysis depends on charge relay system residues Lys-80 and Ser-155. Ser-179 acts as the Acyl-ester intermediate in catalysis.

The protein belongs to the amidase family. GatA subfamily. In terms of assembly, heterotrimer of A, B and C subunits.

It catalyses the reaction L-glutamyl-tRNA(Gln) + L-glutamine + ATP + H2O = L-glutaminyl-tRNA(Gln) + L-glutamate + ADP + phosphate + H(+). Functionally, allows the formation of correctly charged Gln-tRNA(Gln) through the transamidation of misacylated Glu-tRNA(Gln) in organisms which lack glutaminyl-tRNA synthetase. The reaction takes place in the presence of glutamine and ATP through an activated gamma-phospho-Glu-tRNA(Gln). This Cutibacterium acnes (strain DSM 16379 / KPA171202) (Propionibacterium acnes) protein is Glutamyl-tRNA(Gln) amidotransferase subunit A.